Here is a 310-residue protein sequence, read N- to C-terminus: MAKKKMGLLVMAYGTPYKEEDIERYYTHIRHGRKPSSELLEDLKQRYKAIGGISPLAKITLEQAKQLEKRLNDIQDDIEFQMYLGLKHIEPFVEDAVRQMHEDGIKEAVSIVLAPHFSTFSIQSYNERAKAEAKKLGGPVIYTIDSWHDEPKFIDYWVEKVKEVYASMTEEEREKAVLIVSAHSLPEKIIAAGDPYPQQLAETAKLIAEKAGVKHYAVGWQSAGNTPEPWLGPDVQDLTRQLHQEKGYTSFVYVPVGFVADHLEVLYDNDIECKQVTEEIGANYYRPEMPNANPKFIDALATVVLKRIKL.

Fe-coproporphyrin III-binding positions include Y13, R30, 46-47 (RY), S54, and Y125. H183 and E264 together coordinate Fe(2+).

It belongs to the ferrochelatase family.

It is found in the cytoplasm. The enzyme catalyses Fe-coproporphyrin III + 2 H(+) = coproporphyrin III + Fe(2+). It functions in the pathway porphyrin-containing compound metabolism; protoheme biosynthesis. Functionally, involved in coproporphyrin-dependent heme b biosynthesis. Catalyzes the insertion of ferrous iron into coproporphyrin III to form Fe-coproporphyrin III. This Geobacillus sp. (strain WCH70) protein is Coproporphyrin III ferrochelatase.